Reading from the N-terminus, the 62-residue chain is Large ribosomal subunit protein bL32 (62 aa).

Residues 1 to 18 show a composition bias toward basic residues; that stretch reads MGVPKKRTSKMRRDRRRA. The segment at 1 to 22 is disordered; it reads MGVPKKRTSKMRRDRRRAANNN.

This sequence belongs to the bacterial ribosomal protein bL32 family.

This is Large ribosomal subunit protein bL32 from Myxococcus xanthus (strain DK1622).